An 886-amino-acid chain; its full sequence is Isoleucine--tRNA ligase (886 aa).

Residues 60 to 70 (PYANGDIHIGH) carry the 'HIGH' region motif. E546 provides a ligand contact to L-isoleucyl-5'-AMP. Positions 587–591 (KMSKS) match the 'KMSKS' region motif. K590 provides a ligand contact to ATP. The Zn(2+) site is built by C856, C859, C870, and C873.

Belongs to the class-I aminoacyl-tRNA synthetase family. IleS type 1 subfamily. As to quaternary structure, monomer. Requires Zn(2+) as cofactor.

The protein resides in the cytoplasm. The catalysed reaction is tRNA(Ile) + L-isoleucine + ATP = L-isoleucyl-tRNA(Ile) + AMP + diphosphate. Catalyzes the attachment of isoleucine to tRNA(Ile). As IleRS can inadvertently accommodate and process structurally similar amino acids such as valine, to avoid such errors it has two additional distinct tRNA(Ile)-dependent editing activities. One activity is designated as 'pretransfer' editing and involves the hydrolysis of activated Val-AMP. The other activity is designated 'posttransfer' editing and involves deacylation of mischarged Val-tRNA(Ile). The protein is Isoleucine--tRNA ligase of Mesomycoplasma hyopneumoniae (strain J / ATCC 25934 / NCTC 10110) (Mycoplasma hyopneumoniae).